A 244-amino-acid chain; its full sequence is MGQKINPIGFRLGINRTWDSRWFADNAEYGQLLHEDLKMRKFVMSELKQAGISKVVIERPHKKCRVTIHSARPGLIIGRKGADIDKLRKKLSDMTNSETHLNIVEVRKPEVDATLVAQSIAQQLERRVAFRRAMKRAVQSAMRLGAEGIKITCAGRLGGAEIARTEWYREGRVPLHTLRADIDYGTAEAETAFGICGIKVWIFKGEILEHDPMASERRALEGDAQGPASRERDRGDRRRERDNA.

The region spanning Met-39–Arg-107 is the KH type-2 domain. The disordered stretch occupies residues Ala-214–Ala-244. The span at Ser-229 to Ala-244 shows a compositional bias: basic and acidic residues.

The protein belongs to the universal ribosomal protein uS3 family. In terms of assembly, part of the 30S ribosomal subunit. Forms a tight complex with proteins S10 and S14.

Its function is as follows. Binds the lower part of the 30S subunit head. Binds mRNA in the 70S ribosome, positioning it for translation. In Rhizobium etli (strain CIAT 652), this protein is Small ribosomal subunit protein uS3.